A 382-amino-acid polypeptide reads, in one-letter code: Dual-specificity RNA methyltransferase RlmN (382 aa).

Residue Glu-95 is the Proton acceptor of the active site. The Radical SAM core domain maps to 101–349 (EETRGTLCVS…TTVRKTRGDD (249 aa)). Cys-108 and Cys-354 are joined by a disulfide. Residues Cys-115, Cys-119, and Cys-122 each coordinate [4Fe-4S] cluster. Residues 180–181 (GE), Ser-212, 234–236 (SLH), and Asn-311 contribute to the S-adenosyl-L-methionine site. The active-site S-methylcysteine intermediate is the Cys-354.

It belongs to the radical SAM superfamily. RlmN family. [4Fe-4S] cluster serves as cofactor.

It localises to the cytoplasm. It catalyses the reaction adenosine(2503) in 23S rRNA + 2 reduced [2Fe-2S]-[ferredoxin] + 2 S-adenosyl-L-methionine = 2-methyladenosine(2503) in 23S rRNA + 5'-deoxyadenosine + L-methionine + 2 oxidized [2Fe-2S]-[ferredoxin] + S-adenosyl-L-homocysteine. The catalysed reaction is adenosine(37) in tRNA + 2 reduced [2Fe-2S]-[ferredoxin] + 2 S-adenosyl-L-methionine = 2-methyladenosine(37) in tRNA + 5'-deoxyadenosine + L-methionine + 2 oxidized [2Fe-2S]-[ferredoxin] + S-adenosyl-L-homocysteine. In terms of biological role, specifically methylates position 2 of adenine 2503 in 23S rRNA and position 2 of adenine 37 in tRNAs. m2A2503 modification seems to play a crucial role in the proofreading step occurring at the peptidyl transferase center and thus would serve to optimize ribosomal fidelity. The polypeptide is Dual-specificity RNA methyltransferase RlmN (Paraburkholderia phymatum (strain DSM 17167 / CIP 108236 / LMG 21445 / STM815) (Burkholderia phymatum)).